A 200-amino-acid chain; its full sequence is Large ribosomal subunit protein uL4 (200 aa).

Residues 43-71 (RAQKTRAEVSGSGKKPWRQKGTGRARSGD) are disordered.

Belongs to the universal ribosomal protein uL4 family. As to quaternary structure, part of the 50S ribosomal subunit.

Its function is as follows. One of the primary rRNA binding proteins, this protein initially binds near the 5'-end of the 23S rRNA. It is important during the early stages of 50S assembly. It makes multiple contacts with different domains of the 23S rRNA in the assembled 50S subunit and ribosome. Forms part of the polypeptide exit tunnel. The polypeptide is Large ribosomal subunit protein uL4 (Histophilus somni (strain 129Pt) (Haemophilus somnus)).